The following is a 502-amino-acid chain: MKNKENEVLNLTLNLTIIFLIFCNISIXIFKIDFTKHKAFTISKVTKNLFSSANETIYITYYNSGSLENYFAFPNQIKNFLISFSDASKCKVIYKEIDADKISTPLEHIGIPSQQIDLRDINQLSILKIYSGIEIIYEGKREVIPVVTEISNLEYDLANGLDKLINNTKKVLGLAFGDSTLKEAHKNFSEIMKKAFGIEIKEIDLKTEKLEDIRKDINGLFIIGAKEIDEEIAKKIDDFIVNDGKIFVATSTIDYNPQNPYGITPIKSSLFDLFESYGIKYNDNIILDKRAPTIFLGGNFQTYYPWILIDKSNIVKKDMPLLKNFYTATIPWSSSLELIKKDETEVKFLPLFASSKQSWQVKEPNLSNISLNAFEVPNKFEENKTKILGYAIEGKIKSPYKDQYSKNSKIILTGSSMIFSDYMYNGSPSNFELSGRISDYLMQKEEFFNIKSREVRAKLKFASSSNEMVNAKFSLIIVNLIILPTIILIFGLVRFTRKRKAN.

The next 2 helical transmembrane spans lie at 10 to 30 and 473 to 493; these read NLTL…IXIF and FSLI…FGLV.

It localises to the cell membrane. This is an uncharacterized protein from Borreliella burgdorferi (strain ATCC 35210 / DSM 4680 / CIP 102532 / B31) (Borrelia burgdorferi).